The following is a 170-amino-acid chain: Protein-export protein SecB (170 aa).

The protein belongs to the SecB family. Homotetramer, a dimer of dimers. One homotetramer interacts with 1 SecA dimer.

The protein localises to the cytoplasm. Functionally, one of the proteins required for the normal export of preproteins out of the cell cytoplasm. It is a molecular chaperone that binds to a subset of precursor proteins, maintaining them in a translocation-competent state. It also specifically binds to its receptor SecA. This is Protein-export protein SecB from Xanthomonas axonopodis pv. citri (strain 306).